Reading from the N-terminus, the 130-residue chain is Small ribosomal subunit protein uS11 (130 aa).

Belongs to the universal ribosomal protein uS11 family. In terms of assembly, part of the 30S ribosomal subunit. Interacts with proteins S7 and S18. Binds to IF-3.

In terms of biological role, located on the platform of the 30S subunit, it bridges several disparate RNA helices of the 16S rRNA. Forms part of the Shine-Dalgarno cleft in the 70S ribosome. In Gloeothece citriformis (strain PCC 7424) (Cyanothece sp. (strain PCC 7424)), this protein is Small ribosomal subunit protein uS11.